Here is an 86-residue protein sequence, read N- to C-terminus: Colicin-E2 immunity protein (86 aa).

It belongs to the colicins ColE2/ColE8/ColE9 and pyocins S1/S2 family.

This protein is able to protect a cell, which harbors the plasmid ColE2 encoding colicin E2, against colicin E2. The sequence is that of Colicin-E2 immunity protein (imm) from Escherichia coli.